Consider the following 71-residue polypeptide: uncharacterized protein (71 aa).

The protein belongs to the varicellovirus ORF57 protein family.

This is an uncharacterized protein from Homo sapiens (Human).